The primary structure comprises 501 residues: Probable cytosol aminopeptidase (501 aa).

Residues Lys268 and Asp273 each contribute to the Mn(2+) site. Residue Lys280 is part of the active site. Asp291, Asp350, and Glu352 together coordinate Mn(2+). Residue Arg354 is part of the active site.

It belongs to the peptidase M17 family. The cofactor is Mn(2+).

The protein localises to the cytoplasm. The catalysed reaction is Release of an N-terminal amino acid, Xaa-|-Yaa-, in which Xaa is preferably Leu, but may be other amino acids including Pro although not Arg or Lys, and Yaa may be Pro. Amino acid amides and methyl esters are also readily hydrolyzed, but rates on arylamides are exceedingly low.. The enzyme catalyses Release of an N-terminal amino acid, preferentially leucine, but not glutamic or aspartic acids.. Its function is as follows. Presumably involved in the processing and regular turnover of intracellular proteins. Catalyzes the removal of unsubstituted N-terminal amino acids from various peptides. The protein is Probable cytosol aminopeptidase of Idiomarina loihiensis (strain ATCC BAA-735 / DSM 15497 / L2-TR).